The primary structure comprises 115 residues: Phosphoribosyl-AMP cyclohydrolase (115 aa).

Asp80 is a binding site for Mg(2+). Cys81 contacts Zn(2+). Positions 82 and 84 each coordinate Mg(2+). 2 residues coordinate Zn(2+): Cys97 and Cys104.

It belongs to the PRA-CH family. As to quaternary structure, homodimer. Requires Mg(2+) as cofactor. Zn(2+) is required as a cofactor.

It is found in the cytoplasm. The enzyme catalyses 1-(5-phospho-beta-D-ribosyl)-5'-AMP + H2O = 1-(5-phospho-beta-D-ribosyl)-5-[(5-phospho-beta-D-ribosylamino)methylideneamino]imidazole-4-carboxamide. It participates in amino-acid biosynthesis; L-histidine biosynthesis; L-histidine from 5-phospho-alpha-D-ribose 1-diphosphate: step 3/9. Its function is as follows. Catalyzes the hydrolysis of the adenine ring of phosphoribosyl-AMP. This is Phosphoribosyl-AMP cyclohydrolase from Mycolicibacterium smegmatis (strain ATCC 700084 / mc(2)155) (Mycobacterium smegmatis).